The chain runs to 148 residues: 3-dehydroquinate dehydratase (148 aa).

The Proton acceptor role is filled by Tyr-24. Positions 75, 81, and 88 each coordinate substrate. The active-site Proton donor is the His-101. Residues 102 to 103 and Arg-112 each bind substrate; that span reads LS.

Belongs to the type-II 3-dehydroquinase family. In terms of assembly, homododecamer.

The catalysed reaction is 3-dehydroquinate = 3-dehydroshikimate + H2O. The protein operates within metabolic intermediate biosynthesis; chorismate biosynthesis; chorismate from D-erythrose 4-phosphate and phosphoenolpyruvate: step 3/7. Functionally, catalyzes a trans-dehydration via an enolate intermediate. This is 3-dehydroquinate dehydratase from Bartonella henselae (strain ATCC 49882 / DSM 28221 / CCUG 30454 / Houston 1) (Rochalimaea henselae).